Reading from the N-terminus, the 1690-residue chain is DNA-directed RNA polymerase subunit beta' (1690 aa).

C63, C65, C78, and C81 together coordinate Zn(2+). D753, D755, and D757 together coordinate Mg(2+). C1107, C1295, C1302, and C1305 together coordinate Zn(2+).

This sequence belongs to the RNA polymerase beta' chain family. As to quaternary structure, the RNAP catalytic core consists of 2 alpha, 1 beta, 1 beta' and 1 omega subunit. When a sigma factor is associated with the core the holoenzyme is formed, which can initiate transcription. Mg(2+) is required as a cofactor. Requires Zn(2+) as cofactor.

It carries out the reaction RNA(n) + a ribonucleoside 5'-triphosphate = RNA(n+1) + diphosphate. Functionally, DNA-dependent RNA polymerase catalyzes the transcription of DNA into RNA using the four ribonucleoside triphosphates as substrates. In Thermotoga petrophila (strain ATCC BAA-488 / DSM 13995 / JCM 10881 / RKU-1), this protein is DNA-directed RNA polymerase subunit beta'.